The chain runs to 429 residues: Gamma-glutamyl phosphate reductase (429 aa).

The protein belongs to the gamma-glutamyl phosphate reductase family.

The protein localises to the cytoplasm. It carries out the reaction L-glutamate 5-semialdehyde + phosphate + NADP(+) = L-glutamyl 5-phosphate + NADPH + H(+). Its pathway is amino-acid biosynthesis; L-proline biosynthesis; L-glutamate 5-semialdehyde from L-glutamate: step 2/2. Catalyzes the NADPH-dependent reduction of L-glutamate 5-phosphate into L-glutamate 5-semialdehyde and phosphate. The product spontaneously undergoes cyclization to form 1-pyrroline-5-carboxylate. This is Gamma-glutamyl phosphate reductase from Nocardioides sp. (strain ATCC BAA-499 / JS614).